The primary structure comprises 180 residues: Cytokinin-beta-glucosidase 1 (180 aa).

Functionally, hydrolyzes cytokinin glucosides thus liberating free cytokinins. This Panax ginseng (Korean ginseng) protein is Cytokinin-beta-glucosidase 1 (ROLC1).